Reading from the N-terminus, the 61-residue chain is Small ribosomal subunit protein uS14B (61 aa).

4 residues coordinate Zn(2+): Cys24, Cys27, Cys40, and Cys43.

The protein belongs to the universal ribosomal protein uS14 family. Zinc-binding uS14 subfamily. As to quaternary structure, part of the 30S ribosomal subunit. Contacts proteins S3 and S10. Zn(2+) is required as a cofactor.

Functionally, binds 16S rRNA, required for the assembly of 30S particles and may also be responsible for determining the conformation of the 16S rRNA at the A site. The protein is Small ribosomal subunit protein uS14B of Staphylococcus epidermidis (strain ATCC 35984 / DSM 28319 / BCRC 17069 / CCUG 31568 / BM 3577 / RP62A).